A 465-amino-acid chain; its full sequence is VGFKAGVKDYKLTYYTPEYNPKDTDILAAFRVTPQPGVPAEEAGAAVAAESSTGTWTTVWTDGLTSLDRYKGRCYDIEPVAGEESQFIAYVAYPLDLFEEGSVTNMFTSIVGNVFGFKALXXLRLEDLRIPPAYSKTFQGPPHGIQVERDKLNKYGRPLLGCTIKPKLGLSAKNYGRAVYECLRGGLDFTKDDENVNSQPFMRWRDRFLFCAEAIYKAQAETGEIKGHYLNATAGTCEEMMKRAIFARELGVPIVMHDYLTGGFTANTSLARYCRDNGLLLHIHRAMHAVIDRQKNHGMHFRVLAKALRMSGGDHIHAGTVVGKLEGERDITLGFVDLLRDDFVEKDRSRGIYFTQDWVSLPGVIPVASGGIHVWHMPALTEIFGDDSVLQFGGGTLGHPWGNAPGAVANRVALEACVQARNEGRDLAREGNEIIRSAAKWSPELAAACEVWKEIKFEFPAMDTL.

Lys-4 carries the post-translational modification N6,N6,N6-trimethyllysine. Substrate contacts are provided by Asn-113 and Thr-163. Lys-165 serves as the catalytic Proton acceptor. Lys-167 lines the substrate pocket. Lys-191, Asp-193, and Glu-194 together coordinate Mg(2+). An N6-carboxylysine modification is found at Lys-191. Residue His-284 is the Proton acceptor of the active site. Substrate-binding residues include Arg-285, His-317, and Ser-369.

Belongs to the RuBisCO large chain family. Type I subfamily. Heterohexadecamer of 8 large chains and 8 small chains; disulfide-linked. The disulfide link is formed within the large subunit homodimers. Mg(2+) serves as cofactor. The disulfide bond which can form in the large chain dimeric partners within the hexadecamer appears to be associated with oxidative stress and protein turnover.

The protein resides in the plastid. Its subcellular location is the chloroplast. It catalyses the reaction 2 (2R)-3-phosphoglycerate + 2 H(+) = D-ribulose 1,5-bisphosphate + CO2 + H2O. It carries out the reaction D-ribulose 1,5-bisphosphate + O2 = 2-phosphoglycolate + (2R)-3-phosphoglycerate + 2 H(+). RuBisCO catalyzes two reactions: the carboxylation of D-ribulose 1,5-bisphosphate, the primary event in carbon dioxide fixation, as well as the oxidative fragmentation of the pentose substrate in the photorespiration process. Both reactions occur simultaneously and in competition at the same active site. This Passiflora quadrangularis (Grenadine) protein is Ribulose bisphosphate carboxylase large chain.